Consider the following 279-residue polypeptide: Probable flavonol synthase 4 (279 aa).

The segment at 1–25 (MEVERDQHKPPLSLQNNKIPSSQNF) is disordered. Over residues 13–25 (SLQNNKIPSSQNF) the composition is skewed to polar residues. One can recognise a Fe2OG dioxygenase domain in the interval 156-256 (GAGYLMKINY…RMSSVVHIKP (101 aa)). 2-oxoglutarate is bound at residue 164 to 166 (NYY). Fe cation is bound by residues His181, Asp183, and His237. Residue 247-249 (RMS) coordinates 2-oxoglutarate.

The protein belongs to the iron/ascorbate-dependent oxidoreductase family. The cofactor is Fe(2+).

It catalyses the reaction a (2R,3R)-dihydroflavonol + 2-oxoglutarate + O2 = a flavonol + succinate + CO2 + H2O. Its pathway is secondary metabolite biosynthesis; flavonoid biosynthesis. This chain is Probable flavonol synthase 4 (FLS4), found in Arabidopsis thaliana (Mouse-ear cress).